Here is a 238-residue protein sequence, read N- to C-terminus: Cell division protein A (238 aa).

In terms of assembly, interacts with CdvB.

The protein resides in the cytoplasm. It is found in the nucleoid. The protein localises to the cell membrane. In terms of biological role, part of a cell division machinery. The CdvA, CdvB and CdvC proteins polymerize between segregating nucleoids and persist throughout cell division, forming a successively smaller structure during constriction. CdvA is a membrane interacting protein that recruits ESCRT-III homologs to the membrane. The protein is Cell division protein A of Sulfolobus acidocaldarius (strain ATCC 33909 / DSM 639 / JCM 8929 / NBRC 15157 / NCIMB 11770).